Here is a 200-residue protein sequence, read N- to C-terminus: Protein OPI10 homolog (200 aa).

This sequence belongs to the OPI10 family.

It is found in the cytoplasm. The protein localises to the nucleus envelope. The polypeptide is Protein OPI10 homolog (Schizosaccharomyces pombe (strain 972 / ATCC 24843) (Fission yeast)).